We begin with the raw amino-acid sequence, 521 residues long: MNEPISNSSKKTENTTQGVRKIRTMIEGFDEITHGGLPIGRTTLVSGTSGTGKTLLAVQFLYHGIKYFDYPGLFVTFEESPTDIIQNAYSFGWDLQEIVDEGKLFILDASPDPDGQEVVGSFDLSALIERIQYAINKYKAQLVSIDSVTAVFQQYDAASVVRREIFRLVARLKLLGVTSIMTTERIEEYGPIARYGVEEFVSDNVVVLRNVLEGERRRRTAEILKLRGTTHMKGEYPFTITNDGINIFPLGAMRLTQRSSNARISSGVKTLDEMCGGGFFKDSIILATGATGTGKTLLVSKFLEEGCRQGERAILFAYEESRAQLSRNAFSWGIDFEEMERKGLLKLLCSYPESAGLEDHLQIIKSEISEFKPSRIAIDSLSALARGVTNNAFRQFVIGVTGYAKQEEITGFFTNTTDQFMGAHSITESHISTITDTIIMLQYVEIRGEMSRAINVFKMRGSWHDKGIREYSINESGPTIQDSFRNYERIISGSPTRITVDEKNELSRIVRGVKDKTLDEE.

KaiC domains follow at residues 1–248 (MNEP…INIF) and 262–521 (ARIS…LDEE). Residues Gly-50, Thr-51, Gly-52, Lys-53, Thr-54, Leu-55, Ser-90, Lys-225, Leu-226, Arg-227, Thr-229, His-231, Thr-241, Thr-291, Gly-292, Thr-293, Gly-294, Lys-295, Thr-296, and Leu-297 each contribute to the ATP site. Residue Thr-54 participates in Mg(2+) binding. Position 296 (Thr-296) interacts with Mg(2+). Glu-319 is a binding site for Mg(2+). Residue Trp-332 participates in ATP binding. Ser-432 carries the phosphoserine; by autocatalysis modification. Thr-433 is subject to Phosphothreonine; by autocatalysis. Residues Arg-452, Lys-458, Met-459, Arg-460, Ser-462, His-464, and Lys-466 each coordinate ATP.

It belongs to the KaiC family. As to quaternary structure, homohexamer; hexamerization is dependent on ATP-binding. The KaiABC complex composition changes during the circadian cycle to control KaiC phosphorylation. Complexes KaiC(6), KaiA(2-4):KaiC(6), KaiB(6):KaiC(6) and KaiC(6):KaiB(6):KaiA(12) are among the most important forms, many form cooperatively. KaiC interacts with SasA, activating its autokinase function and leading to RpaA activation. Requires Mg(2+) as cofactor. Post-translationally, phosphorylated on serine and threonine residues by autocatalysis. Has a 4 step phosphorylation cycle; the autokinase acts first on Thr-433, then Ser-432. When Ser-432 is modified KaiC switches to an autophosphatase mode, acting first on phospho-Thr-433 then phospho-Ser-432.

It catalyses the reaction L-seryl-[protein] + ATP = O-phospho-L-seryl-[protein] + ADP + H(+). The catalysed reaction is L-threonyl-[protein] + ATP = O-phospho-L-threonyl-[protein] + ADP + H(+). The enzyme catalyses ATP + H2O = ADP + phosphate + H(+). The interaction with KaiA enhances its phosphorylation status, while the interaction with KaiB decreases it. Functionally, central component of the KaiABC oscillator complex, which constitutes the main circadian regulator in cyanobacteria. Complex composition changes during the circadian cycle to control KaiC phosphorylation. KaiA stimulates KaiC autophosphorylation, while KaiB sequesters KaiA, leading to KaiC autodephosphorylation. Clock output pathways impact the RpaA transcriptional regulator. KaiC enhances the autophosphorylation activity of SasA, which then transfers its phosphate group to RpaA to activate it. KaiB and KaiC together enhance the phospho-RpaA dephosphatase activity of CikA. Its function is as follows. Has a weak, temperature-independent ATPase activity; ATPase activity defines the circadian period. The phosphorylation state of KaiC modulates its ATPase activity and effects KaiB binding. This is Circadian clock oscillator protein KaiC from Rippkaea orientalis (strain PCC 8801 / RF-1) (Cyanothece sp. (strain PCC 8801)).